The sequence spans 208 residues: MTRVKVCGITNRSDLDTAVDAGVDAVGLIVDVDVQTPREISPQQAAELAAATPPFVTAVLVTMADVPDAATELVEAVRPDAVQVHGESTPDALASLGAAVEADVIKATDPGTAATYDGHADAVLVDSLDESGAGGTGTVHDWDRTGELVESLQSPVVLAGGLTPENVADAVEAAAPFAVDVASGVEAESGQKDADAVSAFVDAAGGCQ.

It belongs to the TrpF family.

The catalysed reaction is N-(5-phospho-beta-D-ribosyl)anthranilate = 1-(2-carboxyphenylamino)-1-deoxy-D-ribulose 5-phosphate. It functions in the pathway amino-acid biosynthesis; L-tryptophan biosynthesis; L-tryptophan from chorismate: step 3/5. This Natronomonas pharaonis (strain ATCC 35678 / DSM 2160 / CIP 103997 / JCM 8858 / NBRC 14720 / NCIMB 2260 / Gabara) (Halobacterium pharaonis) protein is N-(5'-phosphoribosyl)anthranilate isomerase.